The sequence spans 141 residues: Large ribosomal subunit protein uL11 (141 aa).

Belongs to the universal ribosomal protein uL11 family. In terms of assembly, part of the ribosomal stalk of the 50S ribosomal subunit. Interacts with L10 and the large rRNA to form the base of the stalk. L10 forms an elongated spine to which L12 dimers bind in a sequential fashion forming a multimeric L10(L12)X complex. One or more lysine residues are methylated.

In terms of biological role, forms part of the ribosomal stalk which helps the ribosome interact with GTP-bound translation factors. The sequence is that of Large ribosomal subunit protein uL11 from Wolinella succinogenes (strain ATCC 29543 / DSM 1740 / CCUG 13145 / JCM 31913 / LMG 7466 / NCTC 11488 / FDC 602W) (Vibrio succinogenes).